The chain runs to 292 residues: Sulfofructosephosphate aldolase (292 aa).

The active-site Schiff-base intermediate with substrate is the Lys-193.

Belongs to the aldolase LacD family. As to quaternary structure, homotetramer.

The enzyme catalyses 6-deoxy-6-sulfo-D-fructose 1-phosphate = (2S)-3-sulfolactaldehyde + dihydroxyacetone phosphate. Cleaves 6-deoxy-6-sulfo-D-fructose 1-phosphate (SFP) to form dihydroxyacetone phosphate (DHAP) and 3-sulfolactaldehyde (SLA). The polypeptide is Sulfofructosephosphate aldolase (yihT) (Salmonella typhi).